A 215-amino-acid polypeptide reads, in one-letter code: UPF0502 protein Shal_1801 (215 aa).

It belongs to the UPF0502 family.

This is UPF0502 protein Shal_1801 from Shewanella halifaxensis (strain HAW-EB4).